The chain runs to 314 residues: Ribosomal RNA small subunit methyltransferase H (314 aa).

Residues 36 to 38 (GGH), Asp56, Phe82, Asp104, and Gln111 contribute to the S-adenosyl-L-methionine site.

This sequence belongs to the methyltransferase superfamily. RsmH family.

Its subcellular location is the cytoplasm. The enzyme catalyses cytidine(1402) in 16S rRNA + S-adenosyl-L-methionine = N(4)-methylcytidine(1402) in 16S rRNA + S-adenosyl-L-homocysteine + H(+). Specifically methylates the N4 position of cytidine in position 1402 (C1402) of 16S rRNA. The sequence is that of Ribosomal RNA small subunit methyltransferase H from Ectopseudomonas mendocina (strain ymp) (Pseudomonas mendocina).